The primary structure comprises 154 residues: uncharacterized protein (154 aa).

Coiled coils occupy residues 8 to 48 and 89 to 138; these read DEEV…AIEA and VQEL…RGLV.

This is an uncharacterized protein from Treponema pallidum (strain Nichols).